The primary structure comprises 70 residues: uncharacterized protein (70 aa).

A helical membrane pass occupies residues 15–37 (LLVSSISESAVALIIITIRILFS).

The protein localises to the membrane. This is an uncharacterized protein from Saccharomyces cerevisiae (strain ATCC 204508 / S288c) (Baker's yeast).